Reading from the N-terminus, the 60-residue chain is MKVFSAVLIILFVCSMIIGISEGKEIPVKCKHSGQCLQPCKDAGMRFGKCMNGKCNCTPK.

The N-terminal stretch at methionine 1 to glycine 23 is a signal peptide. Intrachain disulfides connect cysteine 30–cysteine 50, cysteine 36–cysteine 55, and cysteine 40–cysteine 57.

It belongs to the short scorpion toxin superfamily. Potassium channel inhibitor family. Alpha-KTx 03 subfamily. Expressed by the venom gland.

The protein resides in the secreted. Potassium channel inhibitor. The protein is Potassium channel toxin alpha-KTx 3.16 of Mesobuthus gibbosus (Mediterranean checkered scorpion).